A 549-amino-acid polypeptide reads, in one-letter code: Cytoplasmic trehalase (549 aa).

Residues R168, 175-176 (WD), N212, 221-223 (RSQ), 292-294 (RDE), and G324 contribute to the substrate site. Residues D326 and E509 each act as proton donor/acceptor in the active site. E525 lines the substrate pocket.

It belongs to the glycosyl hydrolase 37 family. Monomer.

It localises to the cytoplasm. It carries out the reaction alpha,alpha-trehalose + H2O = alpha-D-glucose + beta-D-glucose. It participates in glycan degradation; trehalose degradation; D-glucose from alpha,alpha-trehalose: step 1/1. In terms of biological role, hydrolyzes trehalose to glucose. Could be involved, in cells returning to low osmolarity conditions, in the utilization of the accumulated cytoplasmic trehalose, which was synthesized in response to high osmolarity. The protein is Cytoplasmic trehalase of Salmonella schwarzengrund (strain CVM19633).